Consider the following 435-residue polypeptide: 3-ketoacyl-CoA thiolase (435 aa).

The active-site Acyl-thioester intermediate is the Cys-98. Active-site proton acceptor residues include His-391 and Cys-421.

The protein belongs to the thiolase-like superfamily. Thiolase family. Heterotetramer of two alpha chains (FadJ) and two beta chains (FadI).

It is found in the cytoplasm. The enzyme catalyses an acyl-CoA + acetyl-CoA = a 3-oxoacyl-CoA + CoA. It functions in the pathway lipid metabolism; fatty acid beta-oxidation. In terms of biological role, catalyzes the final step of fatty acid oxidation in which acetyl-CoA is released and the CoA ester of a fatty acid two carbons shorter is formed. This is 3-ketoacyl-CoA thiolase from Vibrio vulnificus (strain CMCP6).